The following is a 292-amino-acid chain: Elongation factor Ts (292 aa).

Residues 80–83 (TDFV) form an involved in Mg(2+) ion dislocation from EF-Tu region.

It belongs to the EF-Ts family.

Its subcellular location is the cytoplasm. Associates with the EF-Tu.GDP complex and induces the exchange of GDP to GTP. It remains bound to the aminoacyl-tRNA.EF-Tu.GTP complex up to the GTP hydrolysis stage on the ribosome. This Mycoplasmopsis synoviae (strain 53) (Mycoplasma synoviae) protein is Elongation factor Ts.